We begin with the raw amino-acid sequence, 141 residues long: Chorion protein S16 (141 aa).

The signal sequence occupies residues 1–22 (MSANNMRLLCLLLACYISAIVA).

The protein belongs to the chorion protein S16 family.

The protein resides in the secreted. Chorion membrane (egg shell) protein; plays a role in protecting the egg from the environment. The chain is Chorion protein S16 (Cp16) from Drosophila subobscura (Fruit fly).